Consider the following 506-residue polypeptide: uncharacterized protein (506 aa).

Residue 282 to 289 (GIQGTGKS) participates in ATP binding.

Belongs to the AAA ATPase family. Highly divergent.

It localises to the plastid. The protein localises to the chloroplast. This is an uncharacterized protein from Guillardia theta (Cryptophyte).